A 258-amino-acid polypeptide reads, in one-letter code: Acetylglutamate kinase (258 aa).

Substrate-binding positions include Gly44 to Gly45, Arg66, and Asn158. ATP is bound by residues Asp181–Leu186 and Ile209–Thr211.

The protein belongs to the acetylglutamate kinase family. ArgB subfamily. Homodimer.

It localises to the cytoplasm. The catalysed reaction is N-acetyl-L-glutamate + ATP = N-acetyl-L-glutamyl 5-phosphate + ADP. It participates in amino-acid biosynthesis; L-arginine biosynthesis; N(2)-acetyl-L-ornithine from L-glutamate: step 2/4. Functionally, catalyzes the ATP-dependent phosphorylation of N-acetyl-L-glutamate. This chain is Acetylglutamate kinase, found in Escherichia coli O157:H7.